Reading from the N-terminus, the 867-residue chain is Dynamin-1 (867 aa).

The region spanning 28–294 is the Dynamin-type G domain; that stretch reads DLDLPQIAVV…LTNHIRDTLP (267 aa). The G1 motif stretch occupies residues 38–45; sequence GGQSAGKS. Residues S41, G43, K44, S45, S46, R59, and G60 each coordinate GDP. Residues 64 to 66 form a G2 motif region; that stretch reads VTR. Y80 bears the Phosphotyrosine mark. Y125 is subject to 3'-nitrotyrosine; alternate. A Phosphotyrosine; alternate modification is found at Y125. The interval 136 to 139 is G3 motif; it reads DLPG. Residues 205-208 are G4 motif; the sequence is TKLD. K206, D208, D211, N236, R237, and Q239 together coordinate GDP. The tract at residues 235-238 is G5 motif; sequence VNRS. 2 positions are modified to phosphoserine: S306 and S347. Y354 carries the phosphotyrosine modification. At S512 the chain carries Phosphoserine. The PH domain occupies 515 to 625; it reads QDEILVIRKG…WKASFLRAGV (111 aa). The GED domain occupies 659–750; that stretch reads VETIRNLVDS…IIGDINTTTV (92 aa). The tract at residues 767–867 is disordered; the sequence is SVPAGRRSPT…HENRAGKARL (101 aa). Phosphoserine occurs at positions 774 and 778. Residue R796 is modified to Omega-N-methylarginine. Residue S822 is modified to Phosphoserine. Residues 825–843 are compositionally biased toward pro residues; the sequence is PFGPPPQVPSRPNRAPPGV. Residues G847, L851, and K857 each carry the phosphoserine modification. The segment covering 856 to 867 has biased composition (basic and acidic residues); it reads GKHENRAGKARL.

This sequence belongs to the TRAFAC class dynamin-like GTPase superfamily. Dynamin/Fzo/YdjA family. As to quaternary structure, homodimer; homodimerization is mediated by the dynamin-type G domain which promotes assembly-stimulated GTPase activity. Homo-tetramer formed from two dimers in the absence of lipid. Oligomerizes into a helical polymer that self-assembles around the vesicle membrane, when associated to the menbrane through lipid binding. Interacts (via C-terminal proline-rich domain (PRD)) with SNX9 (via SH3 domain); this interaction allows regulation of DNM1 self-assembly during late stages of endocytic vesicle formation and supports DNM1's early functions in accelerating clathrin-coated pits (CCPs) maturation in non neuronals cell. Interacts (via C-terminal proline-rich domain (PRD)) with MYO1E (via SH3 domain); this interaction regulates receptor-mediated endocytosis. Interacts with SNX33 (via SH3 domain); this interaction decreases DNM1-dependent endocytosis. Interacts with DIAPH1. Interacts with GRB2 (via SH3 domain); this interaction mediates disassembly of DNM1 polymers, therefore modulates self-assembly. Forms a complex with BIN1 (via SH3 domain) and SH3GL2 (via SH3 domain). Forms a complex with SH3GL2 (via SH3 domain) and AMPH (via SH3 domain). Forms a complex with SH3GL2 (via SH3 domain) and SYNJ1. Interacts (via C-terminal proline-rich domain (PRD)) with SYT1; this interaction facilitates vesicle fission during clathrin-mediated endocytosis (CME). Interacts (via C-terminal proline-rich domain (PRD)) with PLCG1 (via SH3 domain); this interaction stimulates the release of GDP from DNM1 and enhances DNM1-dependent endocytosis. Interacts with SNPH; this interaction inhibits the binding of DNM1 to AMPH and DNM1-receptor-mediated endocytosis. Interacts with CAV1. Interacts with SH3GLB1 (via SH3 domain). Interacts with PACSIN1 (via SH3 domain), PACSIN2 (via SH3 domain) and PACSIN3 (via SH3 domain). Interacts with UNC119; this interaction decreases DNM1's GTPase activity and affects DNM1's interaction with AMPH. Interacts with AMPH. Interacts (GTP-bound form) with DNAJC6; this interaction allows clathrin-coated vesicle (CCV) formation at the plasma membrane. Post-translationally, phosphorylation at Ser-774 by GSK3B/GSK3-beta leads to inactivation of receptor-mediated endocytosis in non-neuronal cells. Dephosphorylation at Ser-774, through the EGFR downstream signaling, leads to activation and regulates early stages of clathrin-mediated endocytosis (CME). Phosphorylated on Tyr in response to EGF stimulation in cells expressing truncated EGFR. Phosphorylated by CDK5 leading to synaptic vesicle endocytosis (SVE) activation. Expressed exclusively in the brain.

The protein resides in the cell membrane. The protein localises to the membrane. It localises to the clathrin-coated pit. It is found in the cytoplasmic vesicle. Its subcellular location is the presynapse. The protein resides in the secretory vesicle. The protein localises to the chromaffin granule. It catalyses the reaction GTP + H2O = GDP + phosphate + H(+). Its function is as follows. Catalyzes the hydrolysis of GTP and utilizes this energy to mediate vesicle scission and participates in many forms of endocytosis, such as clathrin-mediated endocytosis or synaptic vesicle endocytosis as well as rapid endocytosis (RE). Associates to the membrane, through lipid binding, and self-assembles into rings and stacks of interconnected rings through oligomerization to form a helical polymer around the vesicle membrane leading to constriction of invaginated coated pits around their necks. Self-assembly of the helical polymer induces membrane tubules narrowing until the polymer reaches a length sufficient to trigger GTP hydrolysis. Depending on the curvature imposed on the tubules, membrane detachment from the helical polymer upon GTP hydrolysis can cause spontaneous hemifission followed by complete fission. May play a role in regulating early stages of clathrin-mediated endocytosis in non-neuronal cells through its activation by dephosphorylation via the signaling downstream of EGFR. Controls vesicle size at a step before fission, during formation of membrane pits, at hippocampal synapses. Controls plastic adaptation of the synaptic vesicle recycling machinery to high levels of activity. Mediates rapid endocytosis (RE), a Ca(2+)-dependent and clathrin- and K(+)-independent process in chromaffin cells. Microtubule-associated force-producing protein involved in producing microtubule bundles and able to bind and hydrolyze GTP. Through its interaction with DNAJC6, acts during the early steps of clathrin-coated vesicle (CCV) formation. The protein is Dynamin-1 of Mus musculus (Mouse).